Here is a 389-residue protein sequence, read N- to C-terminus: tRNA-specific 2-thiouridylase MnmA (389 aa).

Residues 21 to 28 and L47 contribute to the ATP site; that span reads AMSGGVDS. Residue C115 is the Nucleophile of the active site. An intrachain disulfide couples C115 to C212. ATP is bound at residue G139. The segment at 162–164 is interaction with tRNA; the sequence is RDQ. The Cysteine persulfide intermediate role is filled by C212.

It belongs to the MnmA/TRMU family.

The protein localises to the cytoplasm. It catalyses the reaction S-sulfanyl-L-cysteinyl-[protein] + uridine(34) in tRNA + AH2 + ATP = 2-thiouridine(34) in tRNA + L-cysteinyl-[protein] + A + AMP + diphosphate + H(+). Its function is as follows. Catalyzes the 2-thiolation of uridine at the wobble position (U34) of tRNA, leading to the formation of s(2)U34. The polypeptide is tRNA-specific 2-thiouridylase MnmA (Xanthobacter autotrophicus (strain ATCC BAA-1158 / Py2)).